We begin with the raw amino-acid sequence, 945 residues long: Chaperone protein ClpD, chloroplastic (945 aa).

The transit peptide at 1–89 (MEVLSTSSPL…FERFTERAIR (89 aa)) directs the protein to the chloroplast. Repeat stretches follow at residues 90–146 (AIIF…WDEA) and 168–233 (FSIS…LKGE). A Clp R domain is found at 90–233 (AIIFSQKEAK…AAALTRLKGE (144 aa)). The disordered stretch occupies residues 233 to 264 (EIAKDGREPSSSSKGSFESPPSGRIAGSGPGG). The segment covering 241-255 (PSSSSKGSFESPPSG) has biased composition (low complexity). Residues 271 to 523 (LEQFCVDLTA…RARIEAFRKK (253 aa)) form an i region. 316-323 (GEAGVGKT) contacts ATP. The interval 555 to 586 (SRQKQDDGDAISDESGELVEESSLPPAAGDDE) is disordered. The segment covering 562–574 (GDAISDESGELVE) has biased composition (acidic residues). The II stretch occupies residues 590-781 (VGPDDIAAVA…LIIMTSNVGS (192 aa)). Residue 664 to 671 (GPTGVGKT) participates in ATP binding.

This sequence belongs to the ClpA/ClpB family. ClpD subfamily. Homodimer and homohexamer. Hexamerization upon addition of ATP. Interacts with CLPT1. Stably associated with the import machinery. It depends on Mg(2+) as a cofactor. In terms of tissue distribution, expressed in stems and leaves.

It is found in the plastid. It localises to the chloroplast stroma. It catalyses the reaction ATP + H2O = ADP + phosphate + H(+). Functionally, molecular chaperone that interact with a ClpP-like protease involved in degradation of denatured proteins in the chloroplast. The ATPase activity of CLPD is stimulated by CLPT1. Has no ADPase activity. Interacts with transit peptides with a positional preference. Localization of the signal sequence at the N-terminal end of a protein seems mandatory for interaction to take place. The protein is Chaperone protein ClpD, chloroplastic of Arabidopsis thaliana (Mouse-ear cress).